The chain runs to 154 residues: MDGARVSDEEVARRVATLKRLKALLQEQREKFAQYLVVLQQQQVAIEAQDAETVLRHVELEEALLGDVQRVQKALAPMEQLCLQQASGVQELAQLRCDLSRVQEQVYAQNEKNRALLRAQVSDLRQQLDEFRAARGLVSYEDGEDSGTVIDLSL.

Coiled coils occupy residues 8–48 (DEEV…AIEA) and 89–138 (VQEL…RGLV).

This is an uncharacterized protein from Treponema pallidum (strain Nichols).